Reading from the N-terminus, the 354-residue chain is Ribosomal RNA large subunit methyltransferase M (354 aa).

Residues S183, 216–219, D235, D255, and D271 each bind S-adenosyl-L-methionine; that span reads SPGG. K300 functions as the Proton acceptor in the catalytic mechanism.

This sequence belongs to the class I-like SAM-binding methyltransferase superfamily. RNA methyltransferase RlmE family. RlmM subfamily. In terms of assembly, monomer.

It localises to the cytoplasm. The catalysed reaction is cytidine(2498) in 23S rRNA + S-adenosyl-L-methionine = 2'-O-methylcytidine(2498) in 23S rRNA + S-adenosyl-L-homocysteine + H(+). Its function is as follows. Catalyzes the 2'-O-methylation at nucleotide C2498 in 23S rRNA. The chain is Ribosomal RNA large subunit methyltransferase M from Pseudomonas entomophila (strain L48).